The following is a 250-amino-acid chain: Pyrroloquinoline-quinone synthase (250 aa).

The protein belongs to the PqqC family.

It catalyses the reaction 6-(2-amino-2-carboxyethyl)-7,8-dioxo-1,2,3,4,7,8-hexahydroquinoline-2,4-dicarboxylate + 3 O2 = pyrroloquinoline quinone + 2 H2O2 + 2 H2O + H(+). The protein operates within cofactor biosynthesis; pyrroloquinoline quinone biosynthesis. Functionally, ring cyclization and eight-electron oxidation of 3a-(2-amino-2-carboxyethyl)-4,5-dioxo-4,5,6,7,8,9-hexahydroquinoline-7,9-dicarboxylic-acid to PQQ. The sequence is that of Pyrroloquinoline-quinone synthase from Xanthomonas oryzae pv. oryzae (strain PXO99A).